The sequence spans 100 residues: Putative septation protein SpoVG (100 aa).

The protein belongs to the SpoVG family.

Could be involved in septation. This Clostridium novyi (strain NT) protein is Putative septation protein SpoVG.